A 218-amino-acid polypeptide reads, in one-letter code: 3-dehydroquinate dehydratase (218 aa).

Residues 29-31 (EFR) and Arg-56 each bind 3-dehydroquinate. The Proton donor/acceptor role is filled by His-116. The active-site Schiff-base intermediate with substrate is Lys-142. Residues Arg-180, Ser-200, and Gln-204 each contribute to the 3-dehydroquinate site.

The protein belongs to the type-I 3-dehydroquinase family. As to quaternary structure, homodimer.

The enzyme catalyses 3-dehydroquinate = 3-dehydroshikimate + H2O. The protein operates within metabolic intermediate biosynthesis; chorismate biosynthesis; chorismate from D-erythrose 4-phosphate and phosphoenolpyruvate: step 3/7. In terms of biological role, involved in the third step of the chorismate pathway, which leads to the biosynthesis of aromatic amino acids. Catalyzes the cis-dehydration of 3-dehydroquinate (DHQ) and introduces the first double bond of the aromatic ring to yield 3-dehydroshikimate. The chain is 3-dehydroquinate dehydratase from Methanococcus maripaludis (strain C6 / ATCC BAA-1332).